We begin with the raw amino-acid sequence, 964 residues long: MASTTVAQLAGELNRSASALLEQLQAAGVQKATPEDVITESDKTRLLDYLKRAHGSAEDGARKKITITKRETSEIRQADATGKTRTVQVEVKKKRVLVKRDEPNAALAESEASEAAPVVDAEEVARREEEHRRQAELLARQEAELKARQEAMEREEAERRARQEAAEAEQKRQAELAAKKAEEEAVAARAAAEASDEAPRRKAEEDAARLATEREAAQKAADEARVAADKIKAEEDAARKRREAAEAEARAIREMMSAPARVLKTPAERKAEEVKKAEQSGTLHKPVKPAGEARPAAAKKPAAPAPAAAPAPGSPAGDKKGGRGKSGWQDDNRGGKRGGLKTRGDTGGGADGWRSGSKGGRNRHGDDNRNAFQAPTEPVVREVHVPETISVADLAHKMSVKAAEVIKQMMKLGQMVTINQVLDQETAMIVVEEMGHQAVAAKLDDPEAMLVGDVQEQTNAEAETRPPVVTVMGHVDHGKTSLLDYIRRAKVAAGEAGGITQHIGAYHVETDRGVITFLDTPGHEAFTAMRARGAKATDIVILVVAADDGVMPQTKEAIAHAKAAGVPIVVAITKVDKPEANPDRVKQELVAESVIPEEYGGDVPFVPVSAKTGEGIDSLLENVLLQAEVLELKAPVNAPAKGLVVEAQLDKGKGPIATVLVQSGTLKRGDVVLAGTAYGRVRAMLDENGKPAKDAGPSIPVEIQGLSEVPGAGEEVLVLPDERKAREIALFRQGKFRDVKLARQQAAKLENMLEQMSEGDVKSLPLIIKADVQGSQEALVHSLKKLSTDEVRVQIVHAAVGGITESDVNLATASKAVIIGFNTRADAGARKLAENHGIDIRYYNIIYDAVDEVKAAMSGMLSPEKREETTGLVEVRQVFHVPKVGAVAGCMVLDGFVKRNSLVRVLRANVVIFSGELDSLKRFKDDVKEVKQGFECGLSIKNFNDVQEGDQLEVYEITEVARTL.

The span at 105 to 119 shows a compositional bias: low complexity; sequence AALAESEASEAAPVV. Disordered regions lie at residues 105 to 133 and 146 to 378; these read AALA…EHRR and KARQ…PTEP. Composition is skewed to basic and acidic residues over residues 123-133, 146-183, 197-253, and 266-278; these read EVARREEEHRR, KARQ…KAEE, EAPR…RAIR, and PAER…KKAE. A compositionally biased stretch (low complexity) spans 288 to 302; the sequence is KPAGEARPAAAKKPA. Over residues 303-313 the composition is skewed to pro residues; the sequence is APAPAAAPAPG. The 170-residue stretch at 464-633 folds into the tr-type G domain; sequence TRPPVVTVMG…LLQAEVLELK (170 aa). Positions 473–480 are G1; the sequence is GHVDHGKT. Residue 473 to 480 participates in GTP binding; the sequence is GHVDHGKT. Residues 498 to 502 form a G2 region; that stretch reads GITQH. The interval 519–522 is G3; it reads DTPG. Residues 519–523 and 573–576 each bind GTP; these read DTPGH and TKVD. The interval 573–576 is G4; that stretch reads TKVD. The segment at 609–611 is G5; it reads SAK.

This sequence belongs to the TRAFAC class translation factor GTPase superfamily. Classic translation factor GTPase family. IF-2 subfamily.

The protein localises to the cytoplasm. Functionally, one of the essential components for the initiation of protein synthesis. Protects formylmethionyl-tRNA from spontaneous hydrolysis and promotes its binding to the 30S ribosomal subunits. Also involved in the hydrolysis of GTP during the formation of the 70S ribosomal complex. In Ralstonia pickettii (strain 12J), this protein is Translation initiation factor IF-2.